Reading from the N-terminus, the 445-residue chain is Arabinooligosaccharide-binding protein (445 aa).

The first 20 residues, 1 to 20 (MGKNILFFSFVGVMVLVLVA), serve as a signal peptide directing secretion. Cysteine 21 carries N-palmitoyl cysteine lipidation. Cysteine 21 carries the S-diacylglycerol cysteine lipid modification.

This sequence belongs to the bacterial solute-binding protein 1 family. The complex is composed of two ATP-binding proteins (MsmX), two transmembrane proteins (AraP and AraQ) and a solute-binding protein (AraN).

The protein resides in the cell membrane. Part of the ABC transporter complex AraNPQ involved in the uptake of arabinooligosaccharides. AraN captures the substrate and delivers it to the two transmembrane components. The protein is Arabinooligosaccharide-binding protein (araN) of Halalkalibacterium halodurans (strain ATCC BAA-125 / DSM 18197 / FERM 7344 / JCM 9153 / C-125) (Bacillus halodurans).